The primary structure comprises 211 residues: C-type lectin domain-containing protein 158 (211 aa).

A signal peptide spans 1–16 (MQKFILSAFVVALVAA).

The sequence is that of C-type lectin domain-containing protein 158 (clec-158) from Caenorhabditis elegans.